A 555-amino-acid polypeptide reads, in one-letter code: Tetracycline 7-halogenase (555 aa).

22-27 contributes to the FAD binding site; it reads GSGLSG.

This sequence belongs to the flavin-dependent halogenase family. Bacterial tryptophan halogenase subfamily. Homodimer.

It catalyses the reaction tetracycline + FADH2 + chloride + O2 = 7-chlorotetracycline + FAD + 2 H2O + H(+). It functions in the pathway antibiotic biosynthesis. Its function is as follows. Involved in the biosynthesis of chlorotetracycline (CTC), an important member from antibiotics tetracycline (TC) family, which inhibits protein synthesis in bacteria and is widely involved in clinical therapy, animal feeds and aquaculture. Utilizes FADH(2) supplied by the flavin reductase CtcQ, to catalyze the chlorination of tetracycline (TC) at C7 position, leading to the production of 7-chlorotetracycline. The enzyme forms a lysine chloramine intermediate on an internal lysine residue before transferring the chlorine to the substrate. It is stereo-selective for the 4S (natural) isomer of tetracycline. This is Tetracycline 7-halogenase from Kitasatospora aureofaciens (Streptomyces aureofaciens).